The primary structure comprises 449 residues: Cortexillin-2 (449 aa).

The actin-binding stretch occupies residues 1–231 (MTDLHKEWEK…ILYTSLFFHA (231 aa)). Calponin-homology (CH) domains lie at 10–119 (KVQE…RKYR) and 128–233 (KSSE…HAYR). Coiled coils occupy residues 232–364 (YRAK…AEGL) and 408–441 (QFEEQAKRLGSKVENENISLEKYLSLKEEELKSA).

The protein belongs to the cortexillin family. Homodimer; parallel.

The protein resides in the cytoplasm. It localises to the cytoskeleton. Its function is as follows. Actin-bundling protein. When linked to F-actin the actin filaments form preferentially anti-parallel bundles that associate into meshworks. Plays a major role in cytokinesis. The protein is Cortexillin-2 (ctxB) of Heterostelium pallidum (strain ATCC 26659 / Pp 5 / PN500) (Cellular slime mold).